Reading from the N-terminus, the 621-residue chain is 1-deoxy-D-xylulose-5-phosphate synthase (621 aa).

Thiamine diphosphate-binding positions include His-80 and 121–123; that span reads GHS. Mg(2+) is bound at residue Asp-152. Thiamine diphosphate contacts are provided by residues 153–154, Asn-181, Tyr-288, and Glu-370; that span reads GA. A Mg(2+)-binding site is contributed by Asn-181.

This sequence belongs to the transketolase family. DXPS subfamily. In terms of assembly, homodimer. It depends on Mg(2+) as a cofactor. Thiamine diphosphate is required as a cofactor.

The catalysed reaction is D-glyceraldehyde 3-phosphate + pyruvate + H(+) = 1-deoxy-D-xylulose 5-phosphate + CO2. It participates in metabolic intermediate biosynthesis; 1-deoxy-D-xylulose 5-phosphate biosynthesis; 1-deoxy-D-xylulose 5-phosphate from D-glyceraldehyde 3-phosphate and pyruvate: step 1/1. Catalyzes the acyloin condensation reaction between C atoms 2 and 3 of pyruvate and glyceraldehyde 3-phosphate to yield 1-deoxy-D-xylulose-5-phosphate (DXP). This is 1-deoxy-D-xylulose-5-phosphate synthase from Vibrio vulnificus (strain CMCP6).